We begin with the raw amino-acid sequence, 476 residues long: MCAGYKILILAYLTTEIWMERQYLSQREVDPGAEFTRNHTISEGTRFKRAVFEGQYCRRFGCCADRDDGCVTQFYEADALCYCDKFCERENSDCCPDYKSFCREEKGWPPRTKPWSPEGCHRDGQHYEEGSVIKENCNSCTCSGQQWKCSQHVCLVQPGLIEHVNKGDYGWTAQNYSQFWGMTLEEGFKYRLGTLPPSPLLLSMNEVTASLTKTTDLPEFFIASYKWPGWTHGPLDQKNCAASWAFSTASVAADRIAIQSQGRYTANLSPQNLISCCAKKRHGCNSGSVDRAWWYLRKRGLVSHACYPLFKDQNATNNGCAMASRSDGRGKRHATTPCPNSIEKSNRIYQCSPPYRVSSNETEIMREIMQNGPVQAIMQVHEDFFNYKTGIYRHITSTNEDSEKYRKFRTHAVKLTGWGTLRGAQGQKEKFWIAANSWGKSWGENGYFRILRGVNESDIEKLIIAAWGQLTSADEP.

Asn38 is a glycosylation site (N-linked (GlcNAc...) asparagine). In terms of domain architecture, SMB spans 59 to 107; sequence RFGCCADRDDGCVTQFYEADALCYCDKFCERENSDCCPDYKSFCREEKG. Cystine bridges form between Cys63/Cys83 and Cys87/Cys94. 4 N-linked (GlcNAc...) asparagine glycosylation sites follow: Asn175, Asn314, Asn360, and Asn455.

It belongs to the peptidase C1 family.

The protein localises to the secreted. It is found in the extracellular space. It localises to the extracellular matrix. Its subcellular location is the basement membrane. Its function is as follows. Mediates adhesion of proximal tubule epithelial cells via integrins alpha3-beta1 and alphaV-beta3. This is a non catalytic peptidase C1 family protein. The chain is Tubulointerstitial nephritis antigen (TINAG) from Bos taurus (Bovine).